The sequence spans 159 residues: Putative ribosomal RNA large subunit methyltransferase H (159 aa).

S-adenosyl-L-methionine-binding positions include Leu-76, Gly-108, and 127–132 (FSKMTF).

It belongs to the RNA methyltransferase RlmH family.

The protein localises to the cytoplasm. It carries out the reaction pseudouridine(1915) in 23S rRNA + S-adenosyl-L-methionine = N(3)-methylpseudouridine(1915) in 23S rRNA + S-adenosyl-L-homocysteine + H(+). In terms of biological role, specifically methylates the pseudouridine at position 1915 (m3Psi1915) in 23S rRNA. The sequence is that of Putative ribosomal RNA large subunit methyltransferase H from Methanococcus maripaludis (strain C7 / ATCC BAA-1331).